A 602-amino-acid polypeptide reads, in one-letter code: Arginine--tRNA ligase (602 aa).

The 'HIGH' region signature appears at Ala-132–His-142.

It belongs to the class-I aminoacyl-tRNA synthetase family. Monomer.

The protein localises to the cytoplasm. The catalysed reaction is tRNA(Arg) + L-arginine + ATP = L-arginyl-tRNA(Arg) + AMP + diphosphate. The chain is Arginine--tRNA ligase from Cupriavidus metallidurans (strain ATCC 43123 / DSM 2839 / NBRC 102507 / CH34) (Ralstonia metallidurans).